Consider the following 768-residue polypeptide: UPF0313 protein VV1_2212 (768 aa).

The Radical SAM core domain occupies 363–640 (AYDMIKTSVN…LHKALLRYHD (278 aa)). [4Fe-4S] cluster contacts are provided by Cys377, Cys381, and Cys384. A disordered region spans residues 674-768 (DARTPAQRRK…GGRNQPSRAR (95 aa)). The span at 679-689 (AQRRKSGRHGA) shows a compositional bias: basic residues. Positions 719 to 731 (GGQSNSAPSRSGS) are enriched in polar residues.

This sequence belongs to the UPF0313 family. It depends on [4Fe-4S] cluster as a cofactor.

In Vibrio vulnificus (strain CMCP6), this protein is UPF0313 protein VV1_2212.